The sequence spans 168 residues: Cyclin-dependent kinase 4 inhibitor C (168 aa).

5 ANK repeats span residues 4-33 (PWGN…NVNA), 37-65 (FGRT…NPNL), 69-98 (TGFA…DVNI), 102-132 (EGNL…NVGH), and 136-165 (KGDT…GGAT).

This sequence belongs to the CDKN2 cyclin-dependent kinase inhibitor family. As to quaternary structure, heterodimer of p18 with CDK6.

Functionally, interacts strongly with CDK6, weakly with CDK4. Inhibits cell growth and proliferation with a correlated dependence on endogenous retinoblastoma protein RB. This Mus musculus (Mouse) protein is Cyclin-dependent kinase 4 inhibitor C (Cdkn2c).